The sequence spans 217 residues: Peptide deformylase 1 (217 aa).

Positions 129 and 171 each coordinate Fe cation. Glu-172 is an active-site residue. His-175 lines the Fe cation pocket.

The protein belongs to the polypeptide deformylase family. Fe(2+) serves as cofactor.

The enzyme catalyses N-terminal N-formyl-L-methionyl-[peptide] + H2O = N-terminal L-methionyl-[peptide] + formate. In terms of biological role, removes the formyl group from the N-terminal Met of newly synthesized proteins. Requires at least a dipeptide for an efficient rate of reaction. N-terminal L-methionine is a prerequisite for activity but the enzyme has broad specificity at other positions. This chain is Peptide deformylase 1, found in Bifidobacterium longum (strain NCC 2705).